A 117-amino-acid chain; its full sequence is MTKTFFSFSFFFTSSLLLLLAATSATASTGNVTSGLRYDGCAPGDTVGECITATVEEEDEEGVEAVVRRILQQRKYLSYKTLQKQPTCDGRIAGNCIGTVNPKGATCTYYQRCKRAA.

Positions 1-27 are cleaved as a signal peptide; the sequence is MTKTFFSFSFFFTSSLLLLLAATSATA. Residues 28-71 constitute a propeptide, removed in mature form; that stretch reads STGNVTSGLRYDGCAPGDTVGECITATVEEEDEEGVEAVVRRIL. Asparagine 31 is a glycosylation site (N-linked (GlcNAc...) asparagine). 2 disulfides stabilise this stretch: cysteine 88/cysteine 96 and cysteine 107/cysteine 113.

It belongs to the plant rapid alkalinization factor (RALF) family.

It localises to the secreted. Functionally, cell signaling peptide that may regulate plant stress, growth, and development. Mediates a rapid alkalinization of extracellular space by mediating a transient increase in the cytoplasmic Ca(2+) concentration leading to a calcium-dependent signaling events through a cell surface receptor and a concomitant activation of some intracellular mitogen-activated protein kinases. The protein is Protein RALF-like 27 (RALFL27) of Arabidopsis thaliana (Mouse-ear cress).